We begin with the raw amino-acid sequence, 349 residues long: Ferredoxin--NADP reductase 1 (349 aa).

FAD contacts are provided by Glu36, Lys44, Tyr48, Ile88, Leu123, Asp290, and Ser331.

It belongs to the ferredoxin--NADP reductase type 2 family. As to quaternary structure, homodimer. Requires FAD as cofactor.

It catalyses the reaction 2 reduced [2Fe-2S]-[ferredoxin] + NADP(+) + H(+) = 2 oxidized [2Fe-2S]-[ferredoxin] + NADPH. This chain is Ferredoxin--NADP reductase 1, found in Bacillus thuringiensis (strain Al Hakam).